Consider the following 305-residue polypeptide: MADEHQFIHDGLQRTQIDEFFSEELSRAGYGGMEVAKTPMGTQIVLKAEKPGMVIGKGGKNIRKITTTLEEEFGLEDPQVDVQEVDEPDLNAQIVADRLANALERGWYFRKAGHTTIDRIMESGALGAEIILSGKVTGARSRVEKFNRGYIKHNGEPAESIVDSGVGTAVMKLGTIGVQVKIIPPEAELPDDFEVYEDIEVEDFVEEPEGDVEELLEAPEDAEAESVGADPEEVIEEETEAEAVEEVAEEEIIDEEGVEAETGDAPTSPPDAAEEPDEALDEDVEAEAEELLDEMEDETTDEEET.

A KH type-2 domain is found at I17–D86. Composition is skewed to acidic residues over residues E207–T262 and A272–T305. The tract at residues E207–T305 is disordered.

This sequence belongs to the universal ribosomal protein uS3 family. As to quaternary structure, part of the 30S ribosomal subunit.

In terms of biological role, binds the lower part of the 30S subunit head. This Natronomonas pharaonis (strain ATCC 35678 / DSM 2160 / CIP 103997 / JCM 8858 / NBRC 14720 / NCIMB 2260 / Gabara) (Halobacterium pharaonis) protein is Small ribosomal subunit protein uS3.